The primary structure comprises 169 residues: S-ribosylhomocysteine lyase (169 aa).

Fe cation-binding residues include His-54, His-58, and Cys-128.

This sequence belongs to the LuxS family. As to quaternary structure, homodimer. Requires Fe cation as cofactor.

It catalyses the reaction S-(5-deoxy-D-ribos-5-yl)-L-homocysteine = (S)-4,5-dihydroxypentane-2,3-dione + L-homocysteine. Functionally, involved in the synthesis of autoinducer 2 (AI-2) which is secreted by bacteria and is used to communicate both the cell density and the metabolic potential of the environment. The regulation of gene expression in response to changes in cell density is called quorum sensing. Catalyzes the transformation of S-ribosylhomocysteine (RHC) to homocysteine (HC) and 4,5-dihydroxy-2,3-pentadione (DPD). The protein is S-ribosylhomocysteine lyase of Shewanella sp. (strain MR-4).